A 283-amino-acid polypeptide reads, in one-letter code: 4-hydroxy-3-methylbut-2-enyl diphosphate reductase (283 aa).

Cys12 serves as a coordination point for [4Fe-4S] cluster. Residues His40 and His73 each coordinate (2E)-4-hydroxy-3-methylbut-2-enyl diphosphate. Dimethylallyl diphosphate is bound by residues His40 and His73. Isopentenyl diphosphate is bound by residues His40 and His73. A [4Fe-4S] cluster-binding site is contributed by Cys95. A (2E)-4-hydroxy-3-methylbut-2-enyl diphosphate-binding site is contributed by His123. His123 lines the dimethylallyl diphosphate pocket. His123 is a binding site for isopentenyl diphosphate. Glu125 acts as the Proton donor in catalysis. Thr161 is a (2E)-4-hydroxy-3-methylbut-2-enyl diphosphate binding site. Cys189 is a [4Fe-4S] cluster binding site. Ser217, Asn219, and Ser261 together coordinate (2E)-4-hydroxy-3-methylbut-2-enyl diphosphate. Dimethylallyl diphosphate contacts are provided by Ser217, Asn219, and Ser261. Isopentenyl diphosphate contacts are provided by Ser217, Asn219, and Ser261.

The protein belongs to the IspH family. [4Fe-4S] cluster serves as cofactor.

The enzyme catalyses isopentenyl diphosphate + 2 oxidized [2Fe-2S]-[ferredoxin] + H2O = (2E)-4-hydroxy-3-methylbut-2-enyl diphosphate + 2 reduced [2Fe-2S]-[ferredoxin] + 2 H(+). It catalyses the reaction dimethylallyl diphosphate + 2 oxidized [2Fe-2S]-[ferredoxin] + H2O = (2E)-4-hydroxy-3-methylbut-2-enyl diphosphate + 2 reduced [2Fe-2S]-[ferredoxin] + 2 H(+). It functions in the pathway isoprenoid biosynthesis; dimethylallyl diphosphate biosynthesis; dimethylallyl diphosphate from (2E)-4-hydroxy-3-methylbutenyl diphosphate: step 1/1. Its pathway is isoprenoid biosynthesis; isopentenyl diphosphate biosynthesis via DXP pathway; isopentenyl diphosphate from 1-deoxy-D-xylulose 5-phosphate: step 6/6. Functionally, catalyzes the conversion of 1-hydroxy-2-methyl-2-(E)-butenyl 4-diphosphate (HMBPP) into a mixture of isopentenyl diphosphate (IPP) and dimethylallyl diphosphate (DMAPP). Acts in the terminal step of the DOXP/MEP pathway for isoprenoid precursor biosynthesis. The polypeptide is 4-hydroxy-3-methylbut-2-enyl diphosphate reductase (Geobacter sp. (strain M21)).